The primary structure comprises 166 residues: ATP synthase subunit b (166 aa).

Residues 10-30 (LLFWMIVSFGIVFVILSKYGF) form a helical membrane-spanning segment.

This sequence belongs to the ATPase B chain family. As to quaternary structure, F-type ATPases have 2 components, F(1) - the catalytic core - and F(0) - the membrane proton channel. F(1) has five subunits: alpha(3), beta(3), gamma(1), delta(1), epsilon(1). F(0) has three main subunits: a(1), b(2) and c(10-14). The alpha and beta chains form an alternating ring which encloses part of the gamma chain. F(1) is attached to F(0) by a central stalk formed by the gamma and epsilon chains, while a peripheral stalk is formed by the delta and b chains.

The protein localises to the cell inner membrane. In terms of biological role, f(1)F(0) ATP synthase produces ATP from ADP in the presence of a proton or sodium gradient. F-type ATPases consist of two structural domains, F(1) containing the extramembraneous catalytic core and F(0) containing the membrane proton channel, linked together by a central stalk and a peripheral stalk. During catalysis, ATP synthesis in the catalytic domain of F(1) is coupled via a rotary mechanism of the central stalk subunits to proton translocation. Functionally, component of the F(0) channel, it forms part of the peripheral stalk, linking F(1) to F(0). This chain is ATP synthase subunit b, found in Parabacteroides distasonis (strain ATCC 8503 / DSM 20701 / CIP 104284 / JCM 5825 / NCTC 11152).